The primary structure comprises 134 residues: Putative protein KRIP1 (134 aa).

The disordered stretch occupies residues 1-134; that stretch reads MSPVHRSRTS…PDPALPLQML (134 aa). Polar residues-rich tracts occupy residues 9–24, 43–55, and 64–79; these read TSQTQEAHKPTSTLSF, SQPNACSRQSHVS, and CSQSKVSPPGTATNPN. Residues 119-128 are compositionally biased toward pro residues; that stretch reads PAKPALPDPA.

As to expression, abundant expression is found in prostate, restricted to cells of epithelial origin in normal and diseased glands. Very low expression is detected in pancreas and ovary.

Its subcellular location is the cytoplasm. It is found in the nucleus. This Homo sapiens (Human) protein is Putative protein KRIP1 (KLKP1).